A 282-amino-acid polypeptide reads, in one-letter code: Eukaryotic translation initiation factor 3 subunit G (282 aa).

The tract at residues 1–27 (MSSSKSLDWADDEDYGTGLPSIQTFDN) is disordered. Phosphoserine is present on residues Ser160 and Ser164. One can recognise an RRM domain in the interval 202–280 (ATLRVTNLSD…LILRCEFSKP (79 aa)).

This sequence belongs to the eIF-3 subunit G family. As to quaternary structure, component of the eukaryotic translation initiation factor 3 (eIF-3) complex. The eIF-3 complex appears to include tif32/eif3a, SPAC25G10.08/eif3b, tif33/eif3c, SPBC4C3.07/eif3f, tif35/eif3g and sum1/eif3i. This set of common subunits may also associate exclusively with either moe1/eif3d and int6/eif3e, or with SPAC821.05/eif3h and SPAC1751.03/eif3m. The eIF-3 complex may also include SPAC3A12.13c/eif3j.

It is found in the cytoplasm. RNA-binding component of the eukaryotic translation initiation factor 3 (eIF-3) complex, which is involved in protein synthesis of a specialized repertoire of mRNAs and, together with other initiation factors, stimulates binding of mRNA and methionyl-tRNAi to the 40S ribosome. The eIF-3 complex specifically targets and initiates translation of a subset of mRNAs involved in cell proliferation. This subunit can bind 18S rRNA. The chain is Eukaryotic translation initiation factor 3 subunit G (tif35) from Schizosaccharomyces pombe (strain 972 / ATCC 24843) (Fission yeast).